Reading from the N-terminus, the 348-residue chain is Phospho-2-dehydro-3-deoxyheptonate aldolase, Trp-sensitive (348 aa).

This sequence belongs to the class-I DAHP synthase family.

It catalyses the reaction D-erythrose 4-phosphate + phosphoenolpyruvate + H2O = 7-phospho-2-dehydro-3-deoxy-D-arabino-heptonate + phosphate. The protein operates within metabolic intermediate biosynthesis; chorismate biosynthesis; chorismate from D-erythrose 4-phosphate and phosphoenolpyruvate: step 1/7. Functionally, stereospecific condensation of phosphoenolpyruvate (PEP) and D-erythrose-4-phosphate (E4P) giving rise to 3-deoxy-D-arabino-heptulosonate-7-phosphate (DAHP). The chain is Phospho-2-dehydro-3-deoxyheptonate aldolase, Trp-sensitive (aroH) from Escherichia coli (strain K12).